The sequence spans 156 residues: ATP synthase subunit b (156 aa).

The helical transmembrane segment at 7–27 (LIGQAIWFALFVFFCMKFVWP) threads the bilayer.

The protein belongs to the ATPase B chain family. In terms of assembly, F-type ATPases have 2 components, F(1) - the catalytic core - and F(0) - the membrane proton channel. F(1) has five subunits: alpha(3), beta(3), gamma(1), delta(1), epsilon(1). F(0) has three main subunits: a(1), b(2) and c(10-14). The alpha and beta chains form an alternating ring which encloses part of the gamma chain. F(1) is attached to F(0) by a central stalk formed by the gamma and epsilon chains, while a peripheral stalk is formed by the delta and b chains.

It is found in the cell inner membrane. F(1)F(0) ATP synthase produces ATP from ADP in the presence of a proton or sodium gradient. F-type ATPases consist of two structural domains, F(1) containing the extramembraneous catalytic core and F(0) containing the membrane proton channel, linked together by a central stalk and a peripheral stalk. During catalysis, ATP synthesis in the catalytic domain of F(1) is coupled via a rotary mechanism of the central stalk subunits to proton translocation. In terms of biological role, component of the F(0) channel, it forms part of the peripheral stalk, linking F(1) to F(0). In Alcanivorax borkumensis (strain ATCC 700651 / DSM 11573 / NCIMB 13689 / SK2), this protein is ATP synthase subunit b.